The sequence spans 209 residues: Large ribosomal subunit protein uL3 (209 aa).

The tract at residues arginine 141 to histidine 164 is disordered.

The protein belongs to the universal ribosomal protein uL3 family. As to quaternary structure, part of the 50S ribosomal subunit. Forms a cluster with proteins L14 and L19.

Its function is as follows. One of the primary rRNA binding proteins, it binds directly near the 3'-end of the 23S rRNA, where it nucleates assembly of the 50S subunit. The sequence is that of Large ribosomal subunit protein uL3 from Clostridium acetobutylicum (strain ATCC 824 / DSM 792 / JCM 1419 / IAM 19013 / LMG 5710 / NBRC 13948 / NRRL B-527 / VKM B-1787 / 2291 / W).